Reading from the N-terminus, the 864-residue chain is DNA mismatch repair protein MutS (864 aa).

ATP is bound at residue 607–614 (GPNMGGKS).

The protein belongs to the DNA mismatch repair MutS family.

This protein is involved in the repair of mismatches in DNA. It is possible that it carries out the mismatch recognition step. This protein has a weak ATPase activity. This chain is DNA mismatch repair protein MutS, found in Neisseria gonorrhoeae (strain ATCC 700825 / FA 1090).